Reading from the N-terminus, the 379-residue chain is Anhydro-N-acetylmuramic acid kinase (379 aa).

9–16 contacts ATP; sequence GTSVDGID.

The protein belongs to the anhydro-N-acetylmuramic acid kinase family.

The enzyme catalyses 1,6-anhydro-N-acetyl-beta-muramate + ATP + H2O = N-acetyl-D-muramate 6-phosphate + ADP + H(+). Its pathway is amino-sugar metabolism; 1,6-anhydro-N-acetylmuramate degradation. It functions in the pathway cell wall biogenesis; peptidoglycan recycling. Catalyzes the specific phosphorylation of 1,6-anhydro-N-acetylmuramic acid (anhMurNAc) with the simultaneous cleavage of the 1,6-anhydro ring, generating MurNAc-6-P. Is required for the utilization of anhMurNAc either imported from the medium or derived from its own cell wall murein, and thus plays a role in cell wall recycling. This Picosynechococcus sp. (strain ATCC 27264 / PCC 7002 / PR-6) (Agmenellum quadruplicatum) protein is Anhydro-N-acetylmuramic acid kinase.